A 417-amino-acid chain; its full sequence is Gamma-glutamyl phosphate reductase (417 aa).

It belongs to the gamma-glutamyl phosphate reductase family.

Its subcellular location is the cytoplasm. It catalyses the reaction L-glutamate 5-semialdehyde + phosphate + NADP(+) = L-glutamyl 5-phosphate + NADPH + H(+). The protein operates within amino-acid biosynthesis; L-proline biosynthesis; L-glutamate 5-semialdehyde from L-glutamate: step 2/2. In terms of biological role, catalyzes the NADPH-dependent reduction of L-glutamate 5-phosphate into L-glutamate 5-semialdehyde and phosphate. The product spontaneously undergoes cyclization to form 1-pyrroline-5-carboxylate. The sequence is that of Gamma-glutamyl phosphate reductase from Legionella pneumophila subsp. pneumophila (strain Philadelphia 1 / ATCC 33152 / DSM 7513).